The primary structure comprises 331 residues: Geranylgeranyl pyrophosphate synthase dpmaD (331 aa).

Isopentenyl diphosphate is bound by residues Lys53, Arg56, and His85. 2 residues coordinate Mg(2+): Asp92 and Asp96. Position 101 (Arg101) interacts with dimethylallyl diphosphate. Arg102 serves as a coordination point for isopentenyl diphosphate. Lys179, Thr180, and Gln213 together coordinate dimethylallyl diphosphate. Asp216 contributes to the Mg(2+) binding site. Residues Asn220, Lys230, and Lys240 each coordinate dimethylallyl diphosphate.

The protein belongs to the FPP/GGPP synthase family. Requires Mg(2+) as cofactor.

It catalyses the reaction isopentenyl diphosphate + dimethylallyl diphosphate = (2E)-geranyl diphosphate + diphosphate. It carries out the reaction isopentenyl diphosphate + (2E)-geranyl diphosphate = (2E,6E)-farnesyl diphosphate + diphosphate. The catalysed reaction is isopentenyl diphosphate + (2E,6E)-farnesyl diphosphate = (2E,6E,10E)-geranylgeranyl diphosphate + diphosphate. It functions in the pathway secondary metabolite biosynthesis; terpenoid biosynthesis. In terms of biological role, geranylgeranyl pyrophosphate synthase; part of the gene cluster that mediates the biosynthesis of the diterpenoid pyrones subglutinols A and B. The first step of the pathway is the synthesis of the alpha-pyrone moiety by the polyketide synthase dpmaA via condensation of one acetyl-CoA starter unit with 3 malonyl-CoA units and 2 methylations. The alpha-pyrone is then combined with geranylgeranyl pyrophosphate (GGPP) formed by the GGPP synthase dpmaD through the action of the prenyltransferase dpmaC to yield a linear alpha-pyrone diterpenoid. Subsequent steps in the diterpenoid pyrone biosynthetic pathway involve the decalin core formation, which is initiated by the epoxidation of the C10-C11 olefin by the FAD-dependent oxidoreductase dpmaE, and is followed by a cyclization cascade catalyzed by the terpene cyclase dpmaB. The dehydrogenase dpmaF is then involved in tetrahydrofuran (THF) ring formation at the C5 unit to complete the formation of subglutinols A and B. The sequence is that of Geranylgeranyl pyrophosphate synthase dpmaD from Metarhizium anisopliae (Entomophthora anisopliae).